Here is a 667-residue protein sequence, read N- to C-terminus: Transketolase (667 aa).

A substrate-binding site is contributed by H27. Thiamine diphosphate contacts are provided by residues H67 and G115–L117. D156 contacts Mg(2+). G157 and N186 together coordinate thiamine diphosphate. Mg(2+) contacts are provided by N186 and I188. Substrate contacts are provided by H262, R357, and S384. Residue H262 coordinates thiamine diphosphate. E411 acts as the Proton donor in catalysis. F437 contacts thiamine diphosphate. 3 residues coordinate substrate: H461, D469, and R520.

It belongs to the transketolase family. In terms of assembly, homodimer. Mg(2+) serves as cofactor. Requires Ca(2+) as cofactor. The cofactor is Mn(2+). Co(2+) is required as a cofactor. It depends on thiamine diphosphate as a cofactor.

It catalyses the reaction D-sedoheptulose 7-phosphate + D-glyceraldehyde 3-phosphate = aldehydo-D-ribose 5-phosphate + D-xylulose 5-phosphate. In terms of biological role, catalyzes the transfer of a two-carbon ketol group from a ketose donor to an aldose acceptor, via a covalent intermediate with the cofactor thiamine pyrophosphate. This Bacillus subtilis (strain 168) protein is Transketolase (tkt).